Reading from the N-terminus, the 651-residue chain is p-hydroxybenzoic acid efflux pump subunit AaeB (651 aa).

11 helical membrane-spanning segments follow: residues Phe11 to Leu31, Ala41 to Ile61, Leu67 to Ile87, Val91 to Val111, Phe119 to Leu139, Glu150 to Ile170, Leu368 to Val388, Phe405 to Pro425, Gln429 to Val449, Leu460 to Phe480, and Leu481 to Ile501.

This sequence belongs to the aromatic acid exporter ArAE (TC 2.A.85) family.

The protein localises to the cell inner membrane. Functionally, forms an efflux pump with AaeA. Could function as a metabolic relief valve, allowing to eliminate certain compounds when they accumulate to high levels in the cell. The protein is p-hydroxybenzoic acid efflux pump subunit AaeB of Yersinia enterocolitica serotype O:8 / biotype 1B (strain NCTC 13174 / 8081).